The following is a 319-amino-acid chain: Thioredoxin reductase (319 aa).

FAD contacts are provided by residues 11-14, 40-41, Gln45, Asn54, Cys145, Asp288, and 295-297; these read SGPA, IA, and RQA. Cys142 and Cys145 are oxidised to a cystine.

It belongs to the class-II pyridine nucleotide-disulfide oxidoreductase family. Homodimer. It depends on FAD as a cofactor.

It is found in the cytoplasm. The catalysed reaction is [thioredoxin]-dithiol + NADP(+) = [thioredoxin]-disulfide + NADPH + H(+). The protein is Thioredoxin reductase (TRR1) of Candida glabrata (strain ATCC 2001 / BCRC 20586 / JCM 3761 / NBRC 0622 / NRRL Y-65 / CBS 138) (Yeast).